The primary structure comprises 145 residues: Putative pre-16S rRNA nuclease (145 aa).

This sequence belongs to the YqgF nuclease family.

The protein resides in the cytoplasm. Could be a nuclease involved in processing of the 5'-end of pre-16S rRNA. The polypeptide is Putative pre-16S rRNA nuclease (Levilactobacillus brevis (strain ATCC 367 / BCRC 12310 / CIP 105137 / JCM 1170 / LMG 11437 / NCIMB 947 / NCTC 947) (Lactobacillus brevis)).